We begin with the raw amino-acid sequence, 331 residues long: 6-phosphogluconolactonase (331 aa).

Belongs to the cycloisomerase 2 family.

The enzyme catalyses 6-phospho-D-glucono-1,5-lactone + H2O = 6-phospho-D-gluconate + H(+). The protein operates within carbohydrate degradation; pentose phosphate pathway; D-ribulose 5-phosphate from D-glucose 6-phosphate (oxidative stage): step 2/3. Catalyzes the hydrolysis of 6-phosphogluconolactone to 6-phosphogluconate. The chain is 6-phosphogluconolactonase from Citrobacter koseri (strain ATCC BAA-895 / CDC 4225-83 / SGSC4696).